The chain runs to 526 residues: Probable feruloyl esterase B-1 (526 aa).

Positions 1 to 19 (MPSLRRLLPFLAAGSAALA) are cleaved as a signal peptide. Intrachain disulfides connect Cys-28–Cys-75 and Cys-63–Cys-114. N-linked (GlcNAc...) asparagine glycans are attached at residues Asn-53, Asn-85, Asn-98, and Asn-138. 3 disulfides stabilise this stretch: Cys-187-Cys-441, Cys-256-Cys-273, and Cys-282-Cys-291. Ser-188 (acyl-ester intermediate) is an active-site residue. Asn-246 carries an N-linked (GlcNAc...) asparagine glycan. Ca(2+) is bound by residues Asp-257, Asp-260, Ala-262, Asp-264, and Ile-266. N-linked (GlcNAc...) asparagine glycosylation is found at Asn-287 and Asn-311. Active-site charge relay system residues include Asp-400 and His-440. N-linked (GlcNAc...) asparagine glycans are attached at residues Asn-490 and Asn-516. An intrachain disulfide couples Cys-503 to Cys-525.

This sequence belongs to the tannase family.

It is found in the secreted. It carries out the reaction feruloyl-polysaccharide + H2O = ferulate + polysaccharide.. Functionally, involved in degradation of plant cell walls. Hydrolyzes the feruloyl-arabinose ester bond in arabinoxylans as well as the feruloyl-galactose and feruloyl-arabinose ester bonds in pectin. The polypeptide is Probable feruloyl esterase B-1 (faeB-1) (Aspergillus flavus (strain ATCC 200026 / FGSC A1120 / IAM 13836 / NRRL 3357 / JCM 12722 / SRRC 167)).